Here is an 88-residue protein sequence, read N- to C-terminus: MITKEQKQQIIATFGSKPNDTGSAEVQIALLDSRIKDLTEHFKANKKDFHSRRGLIAMVNQRKSLLEYLKRSNLESYKKLIEKLGLRK.

This sequence belongs to the universal ribosomal protein uS15 family. As to quaternary structure, part of the 30S ribosomal subunit. Forms a bridge to the 50S subunit in the 70S ribosome, contacting the 23S rRNA.

Functionally, one of the primary rRNA binding proteins, it binds directly to 16S rRNA where it helps nucleate assembly of the platform of the 30S subunit by binding and bridging several RNA helices of the 16S rRNA. Its function is as follows. Forms an intersubunit bridge (bridge B4) with the 23S rRNA of the 50S subunit in the ribosome. The chain is Small ribosomal subunit protein uS15 from Leptospira biflexa serovar Patoc (strain Patoc 1 / Ames).